Reading from the N-terminus, the 235-residue chain is 15,16-dihydrobiliverdin:ferredoxin oxidoreductase (235 aa).

The protein belongs to the HY2 family.

The catalysed reaction is 15,16-dihydrobiliverdin + oxidized 2[4Fe-4S]-[ferredoxin] = biliverdin IXalpha + reduced 2[4Fe-4S]-[ferredoxin] + 2 H(+). Functionally, catalyzes the two-electron reduction of biliverdin IX-alpha at the C15 methine bridge. The sequence is that of 15,16-dihydrobiliverdin:ferredoxin oxidoreductase from Synechococcus sp. (strain CC9605).